We begin with the raw amino-acid sequence, 500 residues long: MLDSTRIFMKAFHLLLFDGSLIFPECILIFGLILLLMIDSTSDQKDIPWFYFISSTSLVMSITALLFRWREEPMISFSGNFQTNHFNEIFQFLILLCSTLSIPLSVEYIECTEMAITEFLLFILTATLGGMFLCGANDFITIFVAPECFSLCSYLLSGYTKKDVRSNEATMKYLLMGGASSSILVHAFSWLYGSSGGEIELQEIVNGLINTQMYNSPGISIALIFITVGIGFKLSPAPSHQWTPDVYEGSPTPVVAFLSVTSKVAASASATRIFDIPFYFSSNEWHLLLEILAILSMILGNLIAITQTSMKRMLAYSSIGQIGYVIIGIIVGDSNGGYASMITYMLFYISMNLGTFACIVLFGLRTGTDNIRDYAGLYTKDPFLALSLALCLLSLGGLPPLAGFFGKLHLFWCGWQAGLSFLVSIGLLTSVLSIYYYLKIIKLLMTGRNQEITPHVRNYKRSPLRSKNSIELSMIVCVIASTIPGISMNPIIAIAQDTLF.

Helical transmembrane passes span 14-34, 47-67, 89-109, 114-134, 139-159, 173-193, 217-237, 285-305, 313-333, 344-364, 385-405, 408-428, and 474-494; these read LLLF…GLIL, IPWF…ALLF, IFQF…VEYI, MAIT…MFLC, FITI…LSGY, YLLM…WLYG, PGIS…LSPA, WHLL…LIAI, MLAY…IVGD, YMLF…LFGL, ALSL…AGFF, LHLF…IGLL, and MIVC…IIAI.

This sequence belongs to the complex I subunit 2 family. In terms of assembly, NDH is composed of at least 16 different subunits, 5 of which are encoded in the nucleus.

It is found in the plastid. It localises to the chloroplast thylakoid membrane. It carries out the reaction a plastoquinone + NADH + (n+1) H(+)(in) = a plastoquinol + NAD(+) + n H(+)(out). The enzyme catalyses a plastoquinone + NADPH + (n+1) H(+)(in) = a plastoquinol + NADP(+) + n H(+)(out). Functionally, NDH shuttles electrons from NAD(P)H:plastoquinone, via FMN and iron-sulfur (Fe-S) centers, to quinones in the photosynthetic chain and possibly in a chloroplast respiratory chain. The immediate electron acceptor for the enzyme in this species is believed to be plastoquinone. Couples the redox reaction to proton translocation, and thus conserves the redox energy in a proton gradient. The sequence is that of NAD(P)H-quinone oxidoreductase subunit 2 A, chloroplastic from Pelargonium hortorum (Common geranium).